Reading from the N-terminus, the 369-residue chain is Holliday junction branch migration complex subunit RuvB (369 aa).

The disordered stretch occupies residues 1 to 21 (MHKNENNRLLGSVSLPDDPDR). Residues 1 to 184 (MHKNENNRLL…FGIPIRLNFY (184 aa)) form a large ATPase domain (RuvB-L) region. ATP contacts are provided by residues leucine 23, arginine 24, glycine 65, lysine 68, threonine 69, threonine 70, 131–133 (EDY), arginine 174, tyrosine 184, and arginine 221. Threonine 69 lines the Mg(2+) pocket. A small ATPAse domain (RuvB-S) region spans residues 185–255 (TIEELEYIVK…IADTALSRLE (71 aa)). Residues 258–369 (HLGLDPLDRN…QKHLWEKDYD (112 aa)) form a head domain (RuvB-H) region. Residues arginine 294, arginine 313, and arginine 318 each coordinate DNA.

It belongs to the RuvB family. As to quaternary structure, homohexamer. Forms an RuvA(8)-RuvB(12)-Holliday junction (HJ) complex. HJ DNA is sandwiched between 2 RuvA tetramers; dsDNA enters through RuvA and exits via RuvB. An RuvB hexamer assembles on each DNA strand where it exits the tetramer. Each RuvB hexamer is contacted by two RuvA subunits (via domain III) on 2 adjacent RuvB subunits; this complex drives branch migration. In the full resolvosome a probable DNA-RuvA(4)-RuvB(12)-RuvC(2) complex forms which resolves the HJ.

Its subcellular location is the cytoplasm. The enzyme catalyses ATP + H2O = ADP + phosphate + H(+). Its function is as follows. The RuvA-RuvB-RuvC complex processes Holliday junction (HJ) DNA during genetic recombination and DNA repair, while the RuvA-RuvB complex plays an important role in the rescue of blocked DNA replication forks via replication fork reversal (RFR). RuvA specifically binds to HJ cruciform DNA, conferring on it an open structure. The RuvB hexamer acts as an ATP-dependent pump, pulling dsDNA into and through the RuvAB complex. RuvB forms 2 homohexamers on either side of HJ DNA bound by 1 or 2 RuvA tetramers; 4 subunits per hexamer contact DNA at a time. Coordinated motions by a converter formed by DNA-disengaged RuvB subunits stimulates ATP hydrolysis and nucleotide exchange. Immobilization of the converter enables RuvB to convert the ATP-contained energy into a lever motion, pulling 2 nucleotides of DNA out of the RuvA tetramer per ATP hydrolyzed, thus driving DNA branch migration. The RuvB motors rotate together with the DNA substrate, which together with the progressing nucleotide cycle form the mechanistic basis for DNA recombination by continuous HJ branch migration. Branch migration allows RuvC to scan DNA until it finds its consensus sequence, where it cleaves and resolves cruciform DNA. The chain is Holliday junction branch migration complex subunit RuvB from Bartonella bacilliformis (strain ATCC 35685 / KC583 / Herrer 020/F12,63).